The sequence spans 506 residues: Glycerol kinase (506 aa).

Threonine 12 provides a ligand contact to ADP. The ATP site is built by threonine 12, threonine 13, and serine 14. Threonine 12 provides a ligand contact to sn-glycerol 3-phosphate. An ADP-binding site is contributed by arginine 16. Arginine 82, glutamate 83, tyrosine 134, and aspartate 246 together coordinate sn-glycerol 3-phosphate. Arginine 82, glutamate 83, tyrosine 134, aspartate 246, and glutamine 247 together coordinate glycerol. ADP-binding residues include threonine 268 and glycine 312. The ATP site is built by threonine 268, glycine 312, glutamine 316, and glycine 413. Residues glycine 413 and asparagine 417 each contribute to the ADP site.

The protein belongs to the FGGY kinase family.

The catalysed reaction is glycerol + ATP = sn-glycerol 3-phosphate + ADP + H(+). Its pathway is polyol metabolism; glycerol degradation via glycerol kinase pathway; sn-glycerol 3-phosphate from glycerol: step 1/1. Its activity is regulated as follows. Inhibited by fructose 1,6-bisphosphate (FBP). Key enzyme in the regulation of glycerol uptake and metabolism. Catalyzes the phosphorylation of glycerol to yield sn-glycerol 3-phosphate. This chain is Glycerol kinase, found in Leifsonia xyli subsp. xyli (strain CTCB07).